A 215-amino-acid chain; its full sequence is Pyridoxine/pyridoxamine 5'-phosphate oxidase (215 aa).

Residues arginine 9–tyrosine 12 and lysine 69 contribute to the substrate site. Residues arginine 64 to lysine 69, phenylalanine 79 to threonine 80, lysine 86, and glutamine 108 each bind FMN. Residues tyrosine 126, arginine 130, and serine 134 each coordinate substrate. FMN contacts are provided by residues glutamine 143–serine 144 and tryptophan 188. A substrate-binding site is contributed by arginine 194 to histidine 196. Arginine 198 is an FMN binding site.

This sequence belongs to the pyridoxamine 5'-phosphate oxidase family. Homodimer. The cofactor is FMN.

It carries out the reaction pyridoxamine 5'-phosphate + O2 + H2O = pyridoxal 5'-phosphate + H2O2 + NH4(+). It catalyses the reaction pyridoxine 5'-phosphate + O2 = pyridoxal 5'-phosphate + H2O2. Its pathway is cofactor metabolism; pyridoxal 5'-phosphate salvage; pyridoxal 5'-phosphate from pyridoxamine 5'-phosphate: step 1/1. It functions in the pathway cofactor metabolism; pyridoxal 5'-phosphate salvage; pyridoxal 5'-phosphate from pyridoxine 5'-phosphate: step 1/1. Functionally, catalyzes the oxidation of either pyridoxine 5'-phosphate (PNP) or pyridoxamine 5'-phosphate (PMP) into pyridoxal 5'-phosphate (PLP). In Pseudomonas fluorescens (strain Pf0-1), this protein is Pyridoxine/pyridoxamine 5'-phosphate oxidase.